The primary structure comprises 125 residues: Photoactive yellow protein (125 aa).

A PAS domain is found at 23–86 (LDGLAFGAIQ…GKFKEGVASG (64 aa)). An S-(4-hydroxycinnamyl)cysteine modification is found at Cys69.

It belongs to the photoactive yellow protein family. As to quaternary structure, monomer. In terms of processing, the 4-hydroxycinnamic acid (p-coumaric acid) chromophore is covalently bound via a thioester linkage.

Its function is as follows. Photoactive blue light protein. Probably functions as a photoreceptor for a negative phototaxis response. The protein is Photoactive yellow protein (pyp) of Halorhodospira halophila (Ectothiorhodospira halophila).